The sequence spans 369 residues: Ribosomal RNA large subunit methyltransferase G (369 aa).

It belongs to the methyltransferase superfamily. RlmG family.

Its subcellular location is the cytoplasm. It carries out the reaction guanosine(1835) in 23S rRNA + S-adenosyl-L-methionine = N(2)-methylguanosine(1835) in 23S rRNA + S-adenosyl-L-homocysteine + H(+). In terms of biological role, specifically methylates the guanine in position 1835 (m2G1835) of 23S rRNA. The polypeptide is Ribosomal RNA large subunit methyltransferase G (Magnetococcus marinus (strain ATCC BAA-1437 / JCM 17883 / MC-1)).